Reading from the N-terminus, the 419-residue chain is Squalene synthase R6 (419 aa).

Residues 397-417 traverse the membrane as a helical segment; that stretch reads TMYLVVLLLGILGVAAAVLMA.

Belongs to the phytoene/squalene synthase family. Requires Mg(2+) as cofactor.

It localises to the membrane. The catalysed reaction is 2 (2E,6E)-farnesyl diphosphate + NADPH + H(+) = squalene + 2 diphosphate + NADP(+). It catalyses the reaction 2 (2E,6E)-farnesyl diphosphate + NADH + H(+) = squalene + 2 diphosphate + NAD(+). It functions in the pathway terpene metabolism; lanosterol biosynthesis; lanosterol from farnesyl diphosphate: step 1/3. Functionally, squalene synthase; part of the gene cluster that mediates the biosynthesis of squalestatin S1 (SQS1, also known as zaragozic acid A), a heavily oxidized fungal polyketide that offers potent cholesterol lowering activity by targeting squalene synthase (SS). Catalyzes the condensation of 2 two farnesyl pyrophosphate moieties to form squalene. The presence of a gene encoding a squalene synthase supports the identification of the cluster as being responsible for SQS1 production and suggests a likely mechanism for self-resistance. This chain is Squalene synthase R6, found in Phoma sp. (strain ATCC 20986 / MF5453).